Reading from the N-terminus, the 176-residue chain is NAD(P)H-quinone oxidoreductase subunit 6, chloroplastic (176 aa).

5 consecutive transmembrane segments (helical) span residues 10–30 (ILVL…VLLT), 33–53 (TFSA…YILL), 60–80 (VAQL…AVMF), 92–112 (FWTI…FSLM), and 152–172 (FYLP…GAIT).

The protein belongs to the complex I subunit 6 family. As to quaternary structure, NDH is composed of at least 16 different subunits, 5 of which are encoded in the nucleus.

The protein localises to the plastid. Its subcellular location is the chloroplast thylakoid membrane. The catalysed reaction is a plastoquinone + NADH + (n+1) H(+)(in) = a plastoquinol + NAD(+) + n H(+)(out). It catalyses the reaction a plastoquinone + NADPH + (n+1) H(+)(in) = a plastoquinol + NADP(+) + n H(+)(out). Functionally, NDH shuttles electrons from NAD(P)H:plastoquinone, via FMN and iron-sulfur (Fe-S) centers, to quinones in the photosynthetic chain and possibly in a chloroplast respiratory chain. The immediate electron acceptor for the enzyme in this species is believed to be plastoquinone. Couples the redox reaction to proton translocation, and thus conserves the redox energy in a proton gradient. The chain is NAD(P)H-quinone oxidoreductase subunit 6, chloroplastic (ndhG) from Oryza nivara (Indian wild rice).